Consider the following 251-residue polypeptide: MLAKRIIPCLDVKDGQVVKGVKFNELKLAGDPVELAQKYDREGADELVFLDITASIEDRGTMLEVVEKTAKNVFIPFTVGGGIKTVDDMRRLLQAGADKVSINSAAVKNPELISQGSDRFGSQCIVVAIDTKKTEEGYQVFINGGTKNTGIPLMDWVKEVKYRGAGEILLTSIDHDGGKNGYDNDIINQVARVSNIPVIASGGAGTIEDFYNVFHKGQASGALAASVFHFEEISVKELKNYLSEKGVEVRL.

Catalysis depends on residues aspartate 11 and aspartate 130.

This sequence belongs to the HisA/HisF family. As to quaternary structure, heterodimer of HisH and HisF.

It is found in the cytoplasm. It catalyses the reaction 5-[(5-phospho-1-deoxy-D-ribulos-1-ylimino)methylamino]-1-(5-phospho-beta-D-ribosyl)imidazole-4-carboxamide + L-glutamine = D-erythro-1-(imidazol-4-yl)glycerol 3-phosphate + 5-amino-1-(5-phospho-beta-D-ribosyl)imidazole-4-carboxamide + L-glutamate + H(+). It functions in the pathway amino-acid biosynthesis; L-histidine biosynthesis; L-histidine from 5-phospho-alpha-D-ribose 1-diphosphate: step 5/9. Its function is as follows. IGPS catalyzes the conversion of PRFAR and glutamine to IGP, AICAR and glutamate. The HisF subunit catalyzes the cyclization activity that produces IGP and AICAR from PRFAR using the ammonia provided by the HisH subunit. In Natranaerobius thermophilus (strain ATCC BAA-1301 / DSM 18059 / JW/NM-WN-LF), this protein is Imidazole glycerol phosphate synthase subunit HisF.